A 464-amino-acid polypeptide reads, in one-letter code: Protein ABHD18 (464 aa).

The N-terminal stretch at 1-24 (MGVSKLDILYRRLLLTKLFIRGWG) is a signal peptide. N-linked (GlcNAc...) asparagine glycosylation occurs at asparagine 341.

The protein belongs to the AB hydrolase superfamily.

The protein localises to the secreted. This chain is Protein ABHD18, found in Mus musculus (Mouse).